The sequence spans 130 residues: Sec-independent protein translocase protein TatB (130 aa).

The chain crosses the membrane as a helical span at residues 2–22 (FANIGWGEMLVLVVVGLVVLG). The tract at residues 108–130 (DAVASAQEAPDEPVRPPFDSDAT) is disordered.

The protein belongs to the TatB family. As to quaternary structure, the Tat system comprises two distinct complexes: a TatABC complex, containing multiple copies of TatA, TatB and TatC subunits, and a separate TatA complex, containing only TatA subunits. Substrates initially bind to the TatABC complex, which probably triggers association of the separate TatA complex to form the active translocon.

Its subcellular location is the cell membrane. In terms of biological role, part of the twin-arginine translocation (Tat) system that transports large folded proteins containing a characteristic twin-arginine motif in their signal peptide across membranes. Together with TatC, TatB is part of a receptor directly interacting with Tat signal peptides. TatB may form an oligomeric binding site that transiently accommodates folded Tat precursor proteins before their translocation. The chain is Sec-independent protein translocase protein TatB from Mycobacterium ulcerans (strain Agy99).